An 85-amino-acid polypeptide reads, in one-letter code: uncharacterized protein (85 aa).

This is an uncharacterized protein from Methanocaldococcus jannaschii (strain ATCC 43067 / DSM 2661 / JAL-1 / JCM 10045 / NBRC 100440) (Methanococcus jannaschii).